The primary structure comprises 369 residues: IST1-like protein (369 aa).

Residues 12–59 (KLKVQLKLAVSRIQILKNKKANIVRDEKRNVAELLRKKNEESARIRVE) are a coiled coil. The tract at residues 224-354 (QIIQQQQQPQ…SSDTGYPDYD (131 aa)) is disordered. 2 stretches are compositionally biased toward low complexity: residues 225–239 (IIQQQQQPQMPSFPI) and 246–270 (PTFSQIQHQQQIQQQYQQQQQSPQF). The segment covering 277–305 (FYNNNSGNQTPQFPTISTNNSDGYSNDKF) has biased composition (polar residues). The span at 306–337 (NNGNNNYNNNNNNNNNNNNNNNHNNNNNNNNN) shows a compositional bias: low complexity.

The protein belongs to the IST1 family.

This is IST1-like protein from Dictyostelium discoideum (Social amoeba).